Reading from the N-terminus, the 551-residue chain is Serine/threonine-protein kinase ppk21 (551 aa).

The tract at residues 24–43 is disordered; the sequence is EARGERNPVKPQSSNVVPGT. The region spanning 55 to 315 is the Protein kinase domain; it reads YVFGDIIGDG…TQQIKQFPFF (261 aa). Residues 65-67 and K84 contribute to the ATP site; that span reads SFS. A PIF-pocket region spans residues 86 to 131; it reads LDKKYIVKENKVKYVNIERDSMMRLNGFPGISRLFHTFQDDLKLYY. ATP contacts are provided by residues 134–136 and E140; that span reads ELA. Catalysis depends on D179, which acts as the Proton acceptor. ATP is bound by residues E183 and D197. S220 carries the post-translational modification Phosphoserine; by autocatalysis. S538 is subject to Phosphoserine.

It belongs to the protein kinase superfamily. AGC Ser/Thr protein kinase family. PDPK1 subfamily.

It localises to the cytoplasm. The protein resides in the nucleus. Its subcellular location is the cytoskeleton. The protein localises to the microtubule organizing center. It is found in the spindle pole body. The catalysed reaction is L-seryl-[protein] + ATP = O-phospho-L-seryl-[protein] + ADP + H(+). It catalyses the reaction L-threonyl-[protein] + ATP = O-phospho-L-threonyl-[protein] + ADP + H(+). The sequence is that of Serine/threonine-protein kinase ppk21 (ppk21) from Schizosaccharomyces pombe (strain 972 / ATCC 24843) (Fission yeast).